Reading from the N-terminus, the 85-residue chain is Cell division topological specificity factor (85 aa).

It belongs to the MinE family.

In terms of biological role, prevents the cell division inhibition by proteins MinC and MinD at internal division sites while permitting inhibition at polar sites. This ensures cell division at the proper site by restricting the formation of a division septum at the midpoint of the long axis of the cell. The chain is Cell division topological specificity factor from Stutzerimonas stutzeri (strain A1501) (Pseudomonas stutzeri).